The chain runs to 476 residues: Bridging integrator 2 (476 aa).

The 217-residue stretch at 26–242 folds into the BAR domain; sequence VLQKLGKTVE…MGKLDKQHSS (217 aa). Disordered stretches follow at residues 269-369 and 395-476; these read YPCP…TEGA and GAAP…LTPL. Positions 279–292 are enriched in polar residues; it reads EPSSGAEQTPTSPR. Over residues 310 to 324 the composition is skewed to pro residues; the sequence is PAEPGAPMPGPPPAS. Residues 325–339 are compositionally biased toward low complexity; sequence PTSVRSASESESECS. The span at 340-353 shows a compositional bias: basic and acidic residues; the sequence is GESREIDLSPKEME. Over residues 461-476 the composition is skewed to polar residues; it reads VSCNPPQDPSESLTPL.

It localises to the cytoplasm. This is Bridging integrator 2 (BIN2) from Gallus gallus (Chicken).